We begin with the raw amino-acid sequence, 157 residues long: Universal stress protein Sll1654 (157 aa).

It belongs to the universal stress protein A family.

This chain is Universal stress protein Sll1654, found in Synechocystis sp. (strain ATCC 27184 / PCC 6803 / Kazusa).